A 469-amino-acid chain; its full sequence is MARGLGAPHWVAVGLLTWATLGLLVAELGGHDDLHDDLQEDFHGHSHRHSHEDFHHGHSHAHGHGHTHESIWHGHTHGHDHGHSHGDLHHGHSHGHSHESLYHRGHGHDNEHSRGGYGESGAPGIKQDLDAVTLWAYALGATVLISAAPFFVLFLIPVESNSPRHRSLLQILLSFASGGLLGDAFLHLIPHALEPHSHHTLEQPGHGHSHSGQGPILSVGLWVLSGIVAFLVVEKFVRHVKGGHGHSHGHGHAHSHTHGSHGHGRQECSTKEKQSSEEEEKETRGVQKRRGGSTVPKDGPVRPQNAEEEKRGLDLRVSGYLNLAADLAHNFTDGLAIGASFRGGRGLGILTTMTVLLHEVPHEVGDFAILVQSGCSKKQAMRLQLLTAVGALAGTACALLTEGGAVGSEIAGGAGPGWVLPFTAGGFIYVATVSVLPELLREASPLQSLLEVLGLLGGVVMMVLIAHLE.

The helical transmembrane segment at 10–30 (WVAVGLLTWATLGLLVAELGG) threads the bilayer. Basic and acidic residues-rich tracts occupy residues 42-56 (FHGHSHRHSHEDFHH) and 66-114 (HTHE…EHSR). The interval 42–121 (FHGHSHRHSH…HSRGGYGESG (80 aa)) is disordered. Position 66 is a pros-methylhistidine (H66). 3 helical membrane-spanning segments follow: residues 138-158 (ALGATVLISAAPFFVLFLIPV), 169-189 (LQILLSFASGGLLGDAFLHLI), and 214-234 (GPILSVGLWVLSGIVAFLVVE). Over residues 242 to 263 (GGHGHSHGHGHAHSHTHGSHGH) the composition is skewed to basic residues. The segment at 242–310 (GGHGHSHGHG…VRPQNAEEEK (69 aa)) is disordered. Residues 264-285 (GRQECSTKEKQSSEEEEKETRG) are compositionally biased toward basic and acidic residues. S275 and S276 each carry phosphoserine. 3 helical membrane passes run 386–406 (LTAVGALAGTACALLTEGGAV), 410–430 (IAGGAGPGWVLPFTAGGFIYV), and 448–468 (SLLEVLGLLGGVVMMVLIAHL).

This sequence belongs to the ZIP transporter (TC 2.A.5) family. KE4/Catsup subfamily. As to quaternary structure, homodimer. In terms of processing, methylation at some His residue by METTL9 leads to reduced zinc-binding. Rapidly phosphorylated by CK2 following Zn(2+) treatment. This phosphorylation is required for efficient cytosolic Zn(2+) release.

The protein resides in the endoplasmic reticulum membrane. Its subcellular location is the golgi apparatus. It is found in the cis-Golgi network membrane. The enzyme catalyses Zn(2+)(in) = Zn(2+)(out). Functionally, transports Zn(2+) from the endoplasmic reticulum (ER)/Golgi apparatus to the cytosol, playing an essential role in the regulation of cytosolic zinc levels. Acts as a gatekeeper of zinc release from intracellular stores, requiring post-translational activation by phosphorylation, resulting in activation of multiple downstream pathways leading to cell growth and proliferation. Has an essential role in B cell development and is required for proper B cell receptor signaling. Plays an important role in maintaining intestinal epithelial homeostasis and skin dermis development by regulating ER function. Controls cell signaling pathways involved in glucose metabolism in skeletal muscle. Has a protective role against ER stress in different biological contexts. Mediates Zn(2+)-induced ferroptosis. The protein is Zinc transporter SLC39A7 of Pongo abelii (Sumatran orangutan).